A 151-amino-acid chain; its full sequence is Small ribosomal subunit protein uS15 (151 aa).

Basic residues predominate over residues 1 to 16 (MPHRSRHKKGRSRSVR). Positions 1-21 (MPHRSRHKKGRSRSVRPAHPT) are disordered.

Belongs to the universal ribosomal protein uS15 family. Part of the 30S ribosomal subunit.

In Pyrobaculum islandicum (strain DSM 4184 / JCM 9189 / GEO3), this protein is Small ribosomal subunit protein uS15.